A 208-amino-acid polypeptide reads, in one-letter code: Adenylyl-sulfate kinase (208 aa).

31 to 38 (GLSGSGKS) provides a ligand contact to ATP. The Phosphoserine intermediate role is filled by Ser-105.

This sequence belongs to the APS kinase family.

It catalyses the reaction adenosine 5'-phosphosulfate + ATP = 3'-phosphoadenylyl sulfate + ADP + H(+). The protein operates within sulfur metabolism; hydrogen sulfide biosynthesis; sulfite from sulfate: step 2/3. In terms of biological role, catalyzes the synthesis of activated sulfate. The polypeptide is Adenylyl-sulfate kinase (Pseudomonas entomophila (strain L48)).